Consider the following 221-residue polypeptide: Histone H1-like protein HC2 (221 aa).

Basic residues-rich tracts occupy residues 1-50 (MLGV…KTVA) and 59-70 (PVAKKATAKKAP). A disordered region spans residues 1 to 70 (MLGVQKKRST…AKKATAKKAP (70 aa)).

It belongs to the histone H1/H5 family. HCT subfamily.

Its function is as follows. Might have a role in establishing the nucleoid structure of elementary bodies. The protein is Histone H1-like protein HC2 (hctB) of Chlamydia trachomatis serovar L2 (strain ATCC VR-902B / DSM 19102 / 434/Bu).